A 499-amino-acid chain; its full sequence is L-arabinose isomerase (499 aa).

Mn(2+) contacts are provided by E306, E333, H350, and H449.

This sequence belongs to the arabinose isomerase family. Mn(2+) is required as a cofactor.

It carries out the reaction beta-L-arabinopyranose = L-ribulose. The protein operates within carbohydrate degradation; L-arabinose degradation via L-ribulose; D-xylulose 5-phosphate from L-arabinose (bacterial route): step 1/3. Its function is as follows. Catalyzes the conversion of L-arabinose to L-ribulose. This is L-arabinose isomerase from Aeromonas hydrophila subsp. hydrophila (strain ATCC 7966 / DSM 30187 / BCRC 13018 / CCUG 14551 / JCM 1027 / KCTC 2358 / NCIMB 9240 / NCTC 8049).